A 398-amino-acid chain; its full sequence is Phosphoglycerate kinase (398 aa).

Residues 21–23 (DFN), Arg-36, 59–62 (HLGR), Arg-119, and Arg-157 each bind substrate. Residues Lys-208, Gly-296, Glu-327, and 354–357 (GGDS) contribute to the ATP site.

It belongs to the phosphoglycerate kinase family. Monomer.

The protein localises to the cytoplasm. It carries out the reaction (2R)-3-phosphoglycerate + ATP = (2R)-3-phospho-glyceroyl phosphate + ADP. It functions in the pathway carbohydrate degradation; glycolysis; pyruvate from D-glyceraldehyde 3-phosphate: step 2/5. This is Phosphoglycerate kinase from Streptococcus pneumoniae (strain 70585).